The chain runs to 332 residues: DNA-directed RNA polymerase subunit alpha (332 aa).

Residues 2-234 (TVTANQVLRP…DQLSVFGDFT (233 aa)) are alpha N-terminal domain (alpha-NTD). The alpha C-terminal domain (alpha-CTD) stretch occupies residues 248 to 332 (VDPVLLRPID…AGVAQHGMLG (85 aa)).

This sequence belongs to the RNA polymerase alpha chain family. As to quaternary structure, homodimer. The RNAP catalytic core consists of 2 alpha, 1 beta, 1 beta' and 1 omega subunit. When a sigma factor is associated with the core the holoenzyme is formed, which can initiate transcription.

It catalyses the reaction RNA(n) + a ribonucleoside 5'-triphosphate = RNA(n+1) + diphosphate. In terms of biological role, DNA-dependent RNA polymerase catalyzes the transcription of DNA into RNA using the four ribonucleoside triphosphates as substrates. This is DNA-directed RNA polymerase subunit alpha from Xanthomonas axonopodis pv. citri (strain 306).